Reading from the N-terminus, the 294-residue chain is Protein PET54 (294 aa).

The protein localises to the mitochondrion inner membrane. Activator of specific mitochondrial mRNAs. PET54 is involved in the excision of intron aI5-beta from pre-mRNA for cytochrome c oxidase I (COX1) and plays a role in promoting the translation of COX3. This is Protein PET54 (PET54) from Saccharomyces bayanus (Yeast).